Consider the following 89-residue polypeptide: Small ribosomal subunit protein uS15 (89 aa).

The protein belongs to the universal ribosomal protein uS15 family. As to quaternary structure, part of the 30S ribosomal subunit. Forms a bridge to the 50S subunit in the 70S ribosome, contacting the 23S rRNA.

In terms of biological role, one of the primary rRNA binding proteins, it binds directly to 16S rRNA where it helps nucleate assembly of the platform of the 30S subunit by binding and bridging several RNA helices of the 16S rRNA. Forms an intersubunit bridge (bridge B4) with the 23S rRNA of the 50S subunit in the ribosome. In Oceanobacillus iheyensis (strain DSM 14371 / CIP 107618 / JCM 11309 / KCTC 3954 / HTE831), this protein is Small ribosomal subunit protein uS15.